The primary structure comprises 93 residues: Integration host factor subunit beta (93 aa).

The protein belongs to the bacterial histone-like protein family. As to quaternary structure, heterodimer of an alpha and a beta chain.

Its function is as follows. This protein is one of the two subunits of integration host factor, a specific DNA-binding protein that functions in genetic recombination as well as in transcriptional and translational control. The chain is Integration host factor subunit beta from Glaesserella parasuis serovar 5 (strain SH0165) (Haemophilus parasuis).